The chain runs to 305 residues: Glycine--tRNA ligase alpha subunit (305 aa).

Belongs to the class-II aminoacyl-tRNA synthetase family. As to quaternary structure, tetramer of two alpha and two beta subunits.

It localises to the cytoplasm. The catalysed reaction is tRNA(Gly) + glycine + ATP = glycyl-tRNA(Gly) + AMP + diphosphate. The polypeptide is Glycine--tRNA ligase alpha subunit (Streptococcus pyogenes serotype M12 (strain MGAS2096)).